We begin with the raw amino-acid sequence, 250 residues long: MTSSSSDRSPLASQLGEVPAPLYARVKQMIVSQIQSGAWPPHHRVPSESELVSQLGFSRMTINRALRELTSDGLLVRMQGVGTFVAEPKGQSALFEVHNIADEIAARGHRHRCQVITLGEEVAGPERALALDVREGQRVFHSLIVHYENDIPVQIEDRYVNAAVAPDYLKQDFTRQTPYAYLTQVAPLTEGEHVVEAILAEPAECKLLQIERGEPCLLIRRRTWSGRVAVTAARLLHPGSRHRLEGRFSS.

The region spanning 20 to 88 (APLYARVKQM…QGVGTFVAEP (69 aa)) is the HTH gntR-type domain. Positions 48-67 (ESELVSQLGFSRMTINRALR) form a DNA-binding region, H-T-H motif.

Its pathway is amino-acid degradation; L-histidine degradation into L-glutamate [regulation]. Repressor which binds to the hutP region in the histidine utilization (hut) operon. It blocks the expression of all the hut genes in the absence of inducer. The polypeptide is Histidine utilization repressor (hutC) (Pseudomonas aeruginosa (strain ATCC 15692 / DSM 22644 / CIP 104116 / JCM 14847 / LMG 12228 / 1C / PRS 101 / PAO1)).